The sequence spans 139 residues: Large-conductance mechanosensitive channel (139 aa).

The next 2 membrane-spanning stretches (helical) occupy residues 14–34 (VVDMAVGIIIGAAFGAIVKSL) and 86–106 (GLFINAVVSFTIVAFAVFLLI).

Belongs to the MscL family. In terms of assembly, homopentamer.

The protein resides in the cell inner membrane. Functionally, channel that opens in response to stretch forces in the membrane lipid bilayer. May participate in the regulation of osmotic pressure changes within the cell. The protein is Large-conductance mechanosensitive channel of Methylobacillus flagellatus (strain ATCC 51484 / DSM 6875 / VKM B-1610 / KT).